Reading from the N-terminus, the 3530-residue chain is Unconventional myosin-XV (3530 aa).

Disordered regions lie at residues 1–46 (MAKE…RTPK), 615–710 (AGMD…PAHV), and 730–1057 (EVPP…QKTL). Residues 663–681 (PPVPPRPPSSGPPPAPPLS) show a composition bias toward pro residues. Low complexity-rich tracts occupy residues 682 to 693 (PALSGLPRPASP), 753 to 763 (AAFGFPGASPR), and 823 to 835 (SPAPRRAAGRLGP). Residues 836–850 (PGSPLPGSPRPPSPP) are compositionally biased toward pro residues. A compositionally biased stretch (low complexity) spans 859–869 (RSSLNLPSRLP). Over residues 903–913 (PLEHRESPREP) the composition is skewed to basic and acidic residues. Over residues 1027-1038 (TKPPTPAPPKDV) the composition is skewed to pro residues. The 678-residue stretch at 1222-1899 (DGVEDMTQLE…LYQLLESMRE (678 aa)) folds into the Myosin motor domain. 1315-1322 (GESGSGKT) provides a ligand contact to ATP. Residues 1323–1350 (EATKLILRYLAAMNQKREVMQQIKILEA) adopt a coiled-coil conformation. Residues 1792-1799 (FMRCLKPN) form an actin-binding region. A neck or regulatory domain region spans residues 1888–2029 (EHLYQLLESM…AQVPQVAPVR (142 aa)). 3 IQ domains span residues 1902-1924 (LNLAALTLQRCLRGFFIKRRFRS), 1925-1954 (LRHKIILLQSRARGYLARQRYQQMRRSLVK), and 1955-1976 (FRSLVHAYVSRRRYLKLRAEWR). Residues 2030–3530 (TPRLQAEPRV…TLPPSEITLL (1501 aa)) form a tail region. The MyTH4 1 domain maps to 2065–2217 (MLTVPLRTPL…PTQLEWTATY (153 aa)). Disordered stretches follow at residues 2311 to 2381 (AASR…GEPA), 2414 to 2446 (YRMKGGGQPGGGSSSGTEDTPRRPPEPKPIPGL), 2490 to 2509 (AEKPPAPEAQPTSVGTGPPA), and 2644 to 2665 (TSAPRPSMAPTSALPSRSLEPP). The segment covering 2349 to 2371 (GYSSHNQDGTNGETEAQRGTATH) has biased composition (polar residues). The segment covering 2417–2427 (KGGGQPGGGSS) has biased composition (gly residues). Positions 2867–2953 (KDSDYVVAVR…PSELVQPAAA (87 aa)) constitute an SH3 domain. The 155-residue stretch at 3050 to 3204 (FTKTPLQESL…PSSIELRAML (155 aa)) folds into the MyTH4 2 domain. One can recognise an FERM domain in the interval 3209-3530 (SKRQLFLLPG…TLPPSEITLL (322 aa)).

The protein belongs to the TRAFAC class myosin-kinesin ATPase superfamily. Myosin family. In terms of assembly, interacts with the third PDZ domain of WHRN which is necessary for localization of WHRN to stereocilium tips. Interacts with EPS8. Interacts with FASLG. As to expression, highly expressed in pituitary. Also expressed at lower levels in adult brain, kidney, liver, lung, pancreas, placenta and skeletal muscle. Not expressed in brain. In the pituitary, highly expressed in anterior gland cells.

The protein localises to the cell projection. It localises to the stereocilium. It is found in the cytoplasm. The protein resides in the cytoskeleton. Myosins are actin-based motor molecules with ATPase activity. Unconventional myosins serve in intracellular movements. Their highly divergent tails are presumed to bind to membranous compartments, which would be moved relative to actin filaments. Required for the arrangement of stereocilia in mature hair bundles. The sequence is that of Unconventional myosin-XV (MYO15A) from Homo sapiens (Human).